The chain runs to 294 residues: Nucleotide-binding protein Maqu_2718 (294 aa).

Residue 8–15 (GRSGSGKS) coordinates ATP. 61-64 (DARN) serves as a coordination point for GTP.

It belongs to the RapZ-like family.

Functionally, displays ATPase and GTPase activities. This Marinobacter nauticus (strain ATCC 700491 / DSM 11845 / VT8) (Marinobacter aquaeolei) protein is Nucleotide-binding protein Maqu_2718.